A 554-amino-acid polypeptide reads, in one-letter code: DNA gyrase subunit A (554 aa).

Residues 1-554 (RGIFRPDRSH…GMATNIPPHN (554 aa)) form the Topo IIA-type catalytic domain. Catalysis depends on Tyr-69, which acts as the O-(5'-phospho-DNA)-tyrosine intermediate. One can recognise a DOD-type homing endonuclease domain in the interval 195–335 (HLGAFISEGF…IQQMLLEFGV (141 aa)).

This sequence belongs to the type II topoisomerase GyrA/ParC subunit family. Heterotetramer, composed of two GyrA and two GyrB chains. In the heterotetramer, GyrA contains the active site tyrosine that forms a transient covalent intermediate with DNA, while GyrB binds cofactors and catalyzes ATP hydrolysis. Post-translationally, this protein undergoes a protein self splicing that involves a post-translational excision of the intervening region (intein) followed by peptide ligation.

It is found in the cytoplasm. The catalysed reaction is ATP-dependent breakage, passage and rejoining of double-stranded DNA.. A type II topoisomerase that negatively supercoils closed circular double-stranded (ds) DNA in an ATP-dependent manner to modulate DNA topology and maintain chromosomes in an underwound state. Negative supercoiling favors strand separation, and DNA replication, transcription, recombination and repair, all of which involve strand separation. Also able to catalyze the interconversion of other topological isomers of dsDNA rings, including catenanes and knotted rings. Type II topoisomerases break and join 2 DNA strands simultaneously in an ATP-dependent manner. In Mycolicibacterium flavescens (Mycobacterium flavescens), this protein is DNA gyrase subunit A (gyrA).